The sequence spans 188 residues: MATTEKPVLSKYRDRMDKAVAALKEEFGSLRTGRASASLLDQIHVDAYGSSMPLTQVAAVSVPEPRMITVNVWDRGMVVSVEKAIRQSDLGLNPVVDGQTLRIPIPPLTEERRKDLAKIAGRYAEQQRVAVRNIRRDANEDLRKAQKDNVISQDEEKRMETEVQKMTDEAIKRIDEALKTKEQEIMQV.

This sequence belongs to the RRF family.

Its subcellular location is the cytoplasm. In terms of biological role, responsible for the release of ribosomes from messenger RNA at the termination of protein biosynthesis. May increase the efficiency of translation by recycling ribosomes from one round of translation to another. This chain is Ribosome-recycling factor, found in Phenylobacterium zucineum (strain HLK1).